A 340-amino-acid polypeptide reads, in one-letter code: Phosphoribosylformylglycinamidine cyclo-ligase (340 aa).

It belongs to the AIR synthase family.

The protein resides in the cytoplasm. It carries out the reaction 2-formamido-N(1)-(5-O-phospho-beta-D-ribosyl)acetamidine + ATP = 5-amino-1-(5-phospho-beta-D-ribosyl)imidazole + ADP + phosphate + H(+). Its pathway is purine metabolism; IMP biosynthesis via de novo pathway; 5-amino-1-(5-phospho-D-ribosyl)imidazole from N(2)-formyl-N(1)-(5-phospho-D-ribosyl)glycinamide: step 2/2. In Streptococcus pyogenes serotype M18 (strain MGAS8232), this protein is Phosphoribosylformylglycinamidine cyclo-ligase.